We begin with the raw amino-acid sequence, 247 residues long: Aliphatic sulfonates import ATP-binding protein SsuB 3 (247 aa).

Residues valine 13 to leucine 227 enclose the ABC transporter domain. ATP is bound at residue glycine 45–serine 52.

Belongs to the ABC transporter superfamily. Aliphatic sulfonates importer (TC 3.A.1.17.2) family. The complex is composed of two ATP-binding proteins (SsuB), two transmembrane proteins (SsuC) and a solute-binding protein (SsuA).

It is found in the cell membrane. The catalysed reaction is ATP + H2O + aliphatic sulfonate-[sulfonate-binding protein]Side 1 = ADP + phosphate + aliphatic sulfonateSide 2 + [sulfonate-binding protein]Side 1.. Part of the ABC transporter complex SsuABC involved in aliphatic sulfonates import. Responsible for energy coupling to the transport system. The sequence is that of Aliphatic sulfonates import ATP-binding protein SsuB 3 from Nocardia farcinica (strain IFM 10152).